Consider the following 672-residue polypeptide: tRNA 5-methylaminomethyl-2-thiouridine biosynthesis bifunctional protein MnmC (672 aa).

The tRNA (mnm(5)s(2)U34)-methyltransferase stretch occupies residues 1 to 243; sequence MTSITHAELG…KREMIAGCME (243 aa). An FAD-dependent cmnm(5)s(2)U34 oxidoreductase region spans residues 269–672; sequence IGGGIASAAL…LRKGKAITEL (404 aa).

In the N-terminal section; belongs to the methyltransferase superfamily. tRNA (mnm(5)s(2)U34)-methyltransferase family. It in the C-terminal section; belongs to the DAO family. It depends on FAD as a cofactor.

It is found in the cytoplasm. It catalyses the reaction 5-aminomethyl-2-thiouridine(34) in tRNA + S-adenosyl-L-methionine = 5-methylaminomethyl-2-thiouridine(34) in tRNA + S-adenosyl-L-homocysteine + H(+). Catalyzes the last two steps in the biosynthesis of 5-methylaminomethyl-2-thiouridine (mnm(5)s(2)U) at the wobble position (U34) in tRNA. Catalyzes the FAD-dependent demodification of cmnm(5)s(2)U34 to nm(5)s(2)U34, followed by the transfer of a methyl group from S-adenosyl-L-methionine to nm(5)s(2)U34, to form mnm(5)s(2)U34. The sequence is that of tRNA 5-methylaminomethyl-2-thiouridine biosynthesis bifunctional protein MnmC from Vibrio vulnificus (strain CMCP6).